A 100-amino-acid chain; its full sequence is Large ribosomal subunit protein bL21 (100 aa).

The protein belongs to the bacterial ribosomal protein bL21 family. Part of the 50S ribosomal subunit. Contacts protein L20.

In terms of biological role, this protein binds to 23S rRNA in the presence of protein L20. The polypeptide is Large ribosomal subunit protein bL21 (Deinococcus deserti (strain DSM 17065 / CIP 109153 / LMG 22923 / VCD115)).